A 427-amino-acid polypeptide reads, in one-letter code: Putative acyl-CoA thioester hydrolase YbhC (427 aa).

A signal peptide spans 1–21 (MNTFSVSRLALALAFGVTLTA). Residue Cys22 is the site of N-palmitoyl cysteine attachment. Cys22 is lipidated: S-diacylglycerol cysteine. Residues 23-42 (SSTPPDQRPSDQTAPGTSSR) are disordered. Residues Cys185 and Cys197 are joined by a disulfide bond. Asp285 (nucleophile) is an active-site residue. Arg345 provides a ligand contact to substrate.

The protein belongs to the pectinesterase family.

The protein resides in the cell outer membrane. Functionally, putative thioesterase. Does not bind pectin, and has no pectinesterase activity. The polypeptide is Putative acyl-CoA thioester hydrolase YbhC (ybhC) (Escherichia coli (strain K12)).